A 388-amino-acid chain; its full sequence is Succinate--CoA ligase [ADP-forming] subunit beta (388 aa).

In terms of domain architecture, ATP-grasp spans 9–244 (KQLFARYGMP…LSQEDERESR (236 aa)). ATP is bound by residues K46, 53–55 (GRG), E99, T102, and E107. Residues N199 and D213 each coordinate Mg(2+). Substrate contacts are provided by residues N264 and 321-323 (GIV).

It belongs to the succinate/malate CoA ligase beta subunit family. Heterotetramer of two alpha and two beta subunits. Mg(2+) is required as a cofactor.

The enzyme catalyses succinate + ATP + CoA = succinyl-CoA + ADP + phosphate. It catalyses the reaction GTP + succinate + CoA = succinyl-CoA + GDP + phosphate. The protein operates within carbohydrate metabolism; tricarboxylic acid cycle; succinate from succinyl-CoA (ligase route): step 1/1. In terms of biological role, succinyl-CoA synthetase functions in the citric acid cycle (TCA), coupling the hydrolysis of succinyl-CoA to the synthesis of either ATP or GTP and thus represents the only step of substrate-level phosphorylation in the TCA. The beta subunit provides nucleotide specificity of the enzyme and binds the substrate succinate, while the binding sites for coenzyme A and phosphate are found in the alpha subunit. The chain is Succinate--CoA ligase [ADP-forming] subunit beta from Serratia proteamaculans (strain 568).